Consider the following 375-residue polypeptide: Lipid-A-disaccharide synthase (375 aa).

This sequence belongs to the LpxB family.

The enzyme catalyses a lipid X + a UDP-2-N,3-O-bis[(3R)-3-hydroxyacyl]-alpha-D-glucosamine = a lipid A disaccharide + UDP + H(+). Its pathway is bacterial outer membrane biogenesis; LPS lipid A biosynthesis. In terms of biological role, condensation of UDP-2,3-diacylglucosamine and 2,3-diacylglucosamine-1-phosphate to form lipid A disaccharide, a precursor of lipid A, a phosphorylated glycolipid that anchors the lipopolysaccharide to the outer membrane of the cell. The polypeptide is Lipid-A-disaccharide synthase (Pseudomonas putida (strain ATCC 700007 / DSM 6899 / JCM 31910 / BCRC 17059 / LMG 24140 / F1)).